The following is a 191-amino-acid chain: MKYIQTEQQIEVPEGVTVSIKSRIVKVVGPRGTLTKNLKHIDVTFTKVNNQLIKVAVHNGGRKHVAALRTVKSLVDNMITGVTKGYKYKMRYVYAHFPINVNIVEKDGAKFIEVRNFLGDKKIRNVPVRDGVTIEFSTNVKDEIVLSGNSVEDVSQNAADLQQICRVRNKDIRKFLDGIYVSHKGFITEDL.

This sequence belongs to the universal ribosomal protein uL6 family. As to quaternary structure, component of the large ribosomal subunit (LSU). Mature yeast ribosomes consist of a small (40S) and a large (60S) subunit. The 40S small subunit contains 1 molecule of ribosomal RNA (18S rRNA) and 33 different proteins (encoded by 57 genes). The large 60S subunit contains 3 rRNA molecules (25S, 5.8S and 5S rRNA) and 46 different proteins (encoded by 81 genes). uL6 lines the binding pocket for eukaryotic elongation factor 2 (eEF2).

The protein resides in the cytoplasm. Functionally, component of the ribosome, a large ribonucleoprotein complex responsible for the synthesis of proteins in the cell. The small ribosomal subunit (SSU) binds messenger RNAs (mRNAs) and translates the encoded message by selecting cognate aminoacyl-transfer RNA (tRNA) molecules. The large subunit (LSU) contains the ribosomal catalytic site termed the peptidyl transferase center (PTC), which catalyzes the formation of peptide bonds, thereby polymerizing the amino acids delivered by tRNAs into a polypeptide chain. The nascent polypeptides leave the ribosome through a tunnel in the LSU and interact with protein factors that function in enzymatic processing, targeting, and the membrane insertion of nascent chains at the exit of the ribosomal tunnel. The chain is Large ribosomal subunit protein uL6A from Saccharomyces cerevisiae (strain ATCC 204508 / S288c) (Baker's yeast).